The following is a 226-amino-acid chain: Endonuclease NucS (226 aa).

The protein belongs to the NucS endonuclease family.

The protein resides in the cytoplasm. Functionally, cleaves both 3' and 5' ssDNA extremities of branched DNA structures. In Mycobacterium ulcerans (strain Agy99), this protein is Endonuclease NucS.